Here is a 57-residue protein sequence, read N- to C-terminus: COP9 signalosome complex subunit 9 (57 aa).

The protein belongs to the CSN9 family. In terms of assembly, component of the CSN complex, probably composed of cops1, cops2, cops3, cops4, cops5, cops6, cops7, cops8 and cops9.

The protein resides in the nucleus. The protein localises to the cytoplasm. It is found in the nucleoplasm. Component of the COP9 signalosome complex (CSN), a complex involved in various cellular and developmental processes. The CSN complex is an essential regulator of the ubiquitin (Ubl) conjugation pathway by mediating the deneddylation of the cullin subunits of SCF-type E3 ligase complexes, leading to decrease the Ubl ligase activity. May play a role in cell proliferation. This chain is COP9 signalosome complex subunit 9, found in Xenopus laevis (African clawed frog).